The primary structure comprises 107 residues: MTEKKNRREKKNPREAKVTFEGLVTEALPNGMFRVRLENDTIILGYISGKIRSSSIRILMGDRVKIEVSRYDSSKGRIIYRLPHKDSKRIEDSKDSEDLKDITDSKD.

Positions 8–83 (REKKNPREAK…SKGRIIYRLP (76 aa)) constitute an S1-like domain.

This sequence belongs to the IF-1 family. As to quaternary structure, component of the 30S ribosomal translation pre-initiation complex which assembles on the 30S ribosome in the order IF-2 and IF-3, IF-1 and N-formylmethionyl-tRNA(fMet); mRNA recruitment can occur at any time during PIC assembly.

Its subcellular location is the plastid. The protein resides in the chloroplast. Its function is as follows. One of the essential components for the initiation of protein synthesis. Stabilizes the binding of IF-2 and IF-3 on the 30S subunit to which N-formylmethionyl-tRNA(fMet) subsequently binds. Helps modulate mRNA selection, yielding the 30S pre-initiation complex (PIC). Upon addition of the 50S ribosomal subunit IF-1, IF-2 and IF-3 are released leaving the mature 70S translation initiation complex. In Lolium perenne (Perennial ryegrass), this protein is Translation initiation factor IF-1, chloroplastic.